The chain runs to 180 residues: Pro-glucagon (180 aa).

A signal peptide spans 1–20; it reads MKSIYFVAGLFVMLVQGSWQ. A disordered region spans residues 26–56; that stretch reads TEEKSRSFSAPQTEPLNDLDQMNEDKRHSQG. Residue serine 54 is modified to Phosphoserine. Positions 84 to 89 are excised as a propeptide; it reads NKNNIA. Residues serine 105 and serine 108 each carry the phosphoserine modification. Arginine 127 is subject to Arginine amide. Residues 131-145 constitute a propeptide that is removed on maturation; the sequence is DFPEEVAIVEEFRRR. Phosphoserine occurs at positions 150 and 152.

Belongs to the glucagon family. In terms of processing, proglucagon is post-translationally processed in a tissue-specific manner in pancreatic A cells and intestinal L cells. In pancreatic A cells, the major bioactive hormone is glucagon cleaved by PCSK2/PC2. In the intestinal L cells PCSK1/PC1 liberates GLP-1, GLP-2, glicentin and oxyntomodulin. GLP-1 is further N-terminally truncated by post-translational processing in the intestinal L cells resulting in GLP-1(7-37) GLP-1-(7-36)amide. The C-terminal amidation is neither important for the metabolism of GLP-1 nor for its effects on the endocrine pancreas. Glucagon is secreted in the A cells of the islets of Langerhans. GLP-1, GLP-2, oxyntomodulin and glicentin are secreted from enteroendocrine cells throughout the gastrointestinal tract. GLP-1 and GLP-2 are also secreted in selected neurons in the brain.

The protein resides in the secreted. Its function is as follows. Plays a key role in glucose metabolism and homeostasis. Regulates blood glucose by increasing gluconeogenesis and decreasing glycolysis. A counterregulatory hormone of insulin, raises plasma glucose levels in response to insulin-induced hypoglycemia. Plays an important role in initiating and maintaining hyperglycemic conditions in diabetes. In terms of biological role, potent stimulator of glucose-dependent insulin release. Also stimulates insulin release in response to IL6. Plays important roles on gastric motility and the suppression of plasma glucagon levels. May be involved in the suppression of satiety and stimulation of glucose disposal in peripheral tissues, independent of the actions of insulin. Has growth-promoting activities on intestinal epithelium. May also regulate the hypothalamic pituitary axis (HPA) via effects on LH, TSH, CRH, oxytocin, and vasopressin secretion. Increases islet mass through stimulation of islet neogenesis and pancreatic beta cell proliferation. Inhibits beta cell apoptosis. Stimulates intestinal growth and up-regulates villus height in the small intestine, concomitant with increased crypt cell proliferation and decreased enterocyte apoptosis. The gastrointestinal tract, from the stomach to the colon is the principal target for GLP-2 action. Plays a key role in nutrient homeostasis, enhancing nutrient assimilation through enhanced gastrointestinal function, as well as increasing nutrient disposal. Stimulates intestinal glucose transport and decreases mucosal permeability. Functionally, significantly reduces food intake. Inhibits gastric emptying in humans. Suppression of gastric emptying may lead to increased gastric distension, which may contribute to satiety by causing a sensation of fullness. Its function is as follows. May modulate gastric acid secretion and the gastro-pyloro-duodenal activity. May play an important role in intestinal mucosal growth in the early period of life. This is Pro-glucagon (GCG) from Canis lupus familiaris (Dog).